The sequence spans 140 residues: Nucleoside diphosphate kinase (140 aa).

ATP contacts are provided by Lys11, Phe59, Arg87, Thr93, Arg104, and Asn114. Residue His117 is the Pros-phosphohistidine intermediate of the active site.

Belongs to the NDK family. As to quaternary structure, homotetramer. Mg(2+) serves as cofactor.

It is found in the cytoplasm. The catalysed reaction is a 2'-deoxyribonucleoside 5'-diphosphate + ATP = a 2'-deoxyribonucleoside 5'-triphosphate + ADP. It catalyses the reaction a ribonucleoside 5'-diphosphate + ATP = a ribonucleoside 5'-triphosphate + ADP. Functionally, major role in the synthesis of nucleoside triphosphates other than ATP. The ATP gamma phosphate is transferred to the NDP beta phosphate via a ping-pong mechanism, using a phosphorylated active-site intermediate. In Chelativorans sp. (strain BNC1), this protein is Nucleoside diphosphate kinase.